Here is a 239-residue protein sequence, read N- to C-terminus: Putative 3-methyladenine DNA glycosylase (239 aa).

This sequence belongs to the DNA glycosylase MPG family.

The chain is Putative 3-methyladenine DNA glycosylase from Pseudomonas aeruginosa (strain LESB58).